A 122-amino-acid polypeptide reads, in one-letter code: Large ribosomal subunit protein uL14 (122 aa).

It belongs to the universal ribosomal protein uL14 family. In terms of assembly, part of the 50S ribosomal subunit. Forms a cluster with proteins L3 and L19. In the 70S ribosome, L14 and L19 interact and together make contacts with the 16S rRNA in bridges B5 and B8.

Functionally, binds to 23S rRNA. Forms part of two intersubunit bridges in the 70S ribosome. This is Large ribosomal subunit protein uL14 from Nitrosospira multiformis (strain ATCC 25196 / NCIMB 11849 / C 71).